Consider the following 456-residue polypeptide: Esterase MT1326 (456 aa).

LysM domains are found at residues 3–50, 54–101, and 105–152; these read STHA…RLIM, TRYT…RLIM, and TRYT…VLVI. Residues serine 294, aspartate 391, and histidine 425 contribute to the active site.

This sequence belongs to the AB hydrolase superfamily.

It localises to the secreted. The protein localises to the cell wall. It carries out the reaction a fatty acid ester + H2O = an aliphatic alcohol + a fatty acid + H(+). Its function is as follows. Exhibits lipolytic activity with medium chain length esters as optimum substrates. This is Esterase MT1326 from Mycobacterium tuberculosis (strain CDC 1551 / Oshkosh).